The chain runs to 217 residues: Adenylate kinase (217 aa).

10 to 15 is an ATP binding site; the sequence is GAGKGT. The segment at 30-59 is NMP; it reads STGDIFRSNIKNGTELGRKAKEYIDKGLLV. AMP contacts are provided by residues Thr31, Arg36, 57–59, 85–88, and Gln92; these read LLV and GFPR. Positions 126 to 163 are LID; it reads GRRVCSKCGMSYHIVYNQPKVENICDSCNGELIQRDDD. Arg127 contacts ATP. 2 residues coordinate Zn(2+): Cys130 and Cys133. 136 to 137 contributes to the ATP binding site; the sequence is SY. Zn(2+) is bound by residues Cys150 and Cys153. AMP-binding residues include Arg160 and Arg171. Residue Glu199 participates in ATP binding.

This sequence belongs to the adenylate kinase family. As to quaternary structure, monomer.

Its subcellular location is the cytoplasm. The enzyme catalyses AMP + ATP = 2 ADP. It functions in the pathway purine metabolism; AMP biosynthesis via salvage pathway; AMP from ADP: step 1/1. Its function is as follows. Catalyzes the reversible transfer of the terminal phosphate group between ATP and AMP. Plays an important role in cellular energy homeostasis and in adenine nucleotide metabolism. This is Adenylate kinase from Acetivibrio thermocellus (strain ATCC 27405 / DSM 1237 / JCM 9322 / NBRC 103400 / NCIMB 10682 / NRRL B-4536 / VPI 7372) (Clostridium thermocellum).